Consider the following 156-residue polypeptide: ATP synthase subunit b (156 aa).

A helical transmembrane segment spans residues 12–32 (VAFFIFVLFCMKFVWPPVIAA).

The protein belongs to the ATPase B chain family. F-type ATPases have 2 components, F(1) - the catalytic core - and F(0) - the membrane proton channel. F(1) has five subunits: alpha(3), beta(3), gamma(1), delta(1), epsilon(1). F(0) has three main subunits: a(1), b(2) and c(10-14). The alpha and beta chains form an alternating ring which encloses part of the gamma chain. F(1) is attached to F(0) by a central stalk formed by the gamma and epsilon chains, while a peripheral stalk is formed by the delta and b chains.

It localises to the cell inner membrane. F(1)F(0) ATP synthase produces ATP from ADP in the presence of a proton or sodium gradient. F-type ATPases consist of two structural domains, F(1) containing the extramembraneous catalytic core and F(0) containing the membrane proton channel, linked together by a central stalk and a peripheral stalk. During catalysis, ATP synthesis in the catalytic domain of F(1) is coupled via a rotary mechanism of the central stalk subunits to proton translocation. Functionally, component of the F(0) channel, it forms part of the peripheral stalk, linking F(1) to F(0). This chain is ATP synthase subunit b, found in Pseudomonas syringae pv. syringae (strain B728a).